The primary structure comprises 424 residues: Protein shisa-9 (424 aa).

An N-terminal signal peptide occupies residues 1-23; sequence MRRVLRLLLGCFLTELCARVCRA. Topologically, residues 24 to 149 are extracellular; the sequence is QERAGHGQLA…DPLHDPTKDK (126 aa). N-linked (GlcNAc...) asparagine glycosylation is found at N45, N89, and N116. The helical transmembrane segment at 150 to 170 threads the bilayer; sequence TNLIVYIICGVVAVMVLVGIF. At 171–424 the chain is on the cytoplasmic side; it reads TKLGLEKAHR…ITNSKTEVTV (254 aa). Positions 333-424 are disordered; the sequence is PRAFSPEHGP…ITNSKTEVTV (92 aa). Polar residues predominate over residues 414-424; that stretch reads FITNSKTEVTV.

This sequence belongs to the shisa family. SHISA9 subfamily. Component of some AMPA receptors (ionotropic glutamate receptors) complex, at least composed of some AMPA receptor (GRIA1, GRIA2 and/or GRIA3), CACNG2 and SHISA9, as well as low level of DLG4.

It is found in the cell projection. Its subcellular location is the dendritic spine membrane. The protein resides in the synapse. Its function is as follows. Regulator of short-term neuronal synaptic plasticity in the dentate gyrus. Associates with AMPA receptors (ionotropic glutamate receptors) in synaptic spines and promotes AMPA receptor desensitization at excitatory synapses. This is Protein shisa-9 (SHISA9) from Homo sapiens (Human).